Reading from the N-terminus, the 1024-residue chain is Beta-galactosidase (1024 aa).

The substrate site is built by Asn-103 and Asp-202. Asp-202 contributes to the Na(+) binding site. Mg(2+)-binding residues include Glu-417, His-419, and Glu-462. Substrate is bound by residues Glu-462 and 538–541 (EYAH). The active-site Proton donor is the Glu-462. The active-site Nucleophile is the Glu-538. Asn-598 provides a ligand contact to Mg(2+). Na(+) contacts are provided by Phe-602 and Asn-605. 2 residues coordinate substrate: Asn-605 and Trp-1000.

The protein belongs to the glycosyl hydrolase 2 family. Homotetramer. Mg(2+) serves as cofactor. Requires Na(+) as cofactor.

The enzyme catalyses Hydrolysis of terminal non-reducing beta-D-galactose residues in beta-D-galactosides.. In Klebsiella pneumoniae, this protein is Beta-galactosidase.